A 176-amino-acid chain; its full sequence is MRNKPFYLLCAFLWLAVSHALAADSTITIRGYVRDNGCSVAAESTNFTVDLMENAAKQFNNIGATTPVVPFRILLSPCGNAVSAVKVGFTGVADSHNANLLALENTVSAASGLGIQLLNEQQNQIPLNAPSSALSWTTLTPGKPNTLNFYARLMATQVPVTAGHINATATFTLEYQ.

Residues 1–20 (MRNKPFYLLCAFLWLAVSHA) form the signal peptide. A disulfide bridge links Cys-38 with Cys-78.

This sequence belongs to the fimbrial protein family.

The protein resides in the fimbrium. Functionally, involved in regulation of length and mediation of adhesion of type 1 fimbriae (but not necessary for the production of fimbriae). Involved in the integration of FimH in the fimbriae. The polypeptide is Protein FimF (fimF) (Escherichia coli (strain K12)).